Reading from the N-terminus, the 335-residue chain is Glycerol-3-phosphate dehydrogenase [NAD(P)+] (335 aa).

NADPH-binding residues include Ser-12, Trp-13, and Lys-107. Sn-glycerol 3-phosphate is bound by residues Lys-107, Gly-138, and Ser-140. Ala-142 contributes to the NADPH binding site. 5 residues coordinate sn-glycerol 3-phosphate: Lys-193, Asp-246, Ser-256, Arg-257, and Asn-258. The active-site Proton acceptor is the Lys-193. Arg-257 contributes to the NADPH binding site. Positions 281 and 283 each coordinate NADPH.

It belongs to the NAD-dependent glycerol-3-phosphate dehydrogenase family.

The protein resides in the cytoplasm. It carries out the reaction sn-glycerol 3-phosphate + NAD(+) = dihydroxyacetone phosphate + NADH + H(+). It catalyses the reaction sn-glycerol 3-phosphate + NADP(+) = dihydroxyacetone phosphate + NADPH + H(+). It functions in the pathway membrane lipid metabolism; glycerophospholipid metabolism. Its function is as follows. Catalyzes the reduction of the glycolytic intermediate dihydroxyacetone phosphate (DHAP) to sn-glycerol 3-phosphate (G3P), the key precursor for phospholipid synthesis. The sequence is that of Glycerol-3-phosphate dehydrogenase [NAD(P)+] from Geobacter sp. (strain M21).